The following is a 100-amino-acid chain: Small ribosomal subunit protein uS14c (100 aa).

Belongs to the universal ribosomal protein uS14 family. Part of the 30S ribosomal subunit.

Its subcellular location is the plastid. It is found in the chloroplast. Functionally, binds 16S rRNA, required for the assembly of 30S particles. In Tetradesmus obliquus (Green alga), this protein is Small ribosomal subunit protein uS14c.